The following is a 422-amino-acid chain: MFYDRARIFVKGGDGGNGCVAMRREKYVPEGGPWGGDGGRGGNVILRADGGLRTLVDFRYKRHYKAERGRHGEGKNMHGASGEDLVIRVPAGTVVKDAATGELIADLVRDGQEAVVARGGRGGRGNARFVTPQNRAPRMAEKGEPGEERWLDLELKLLADVGLVGFPNAGKSTLISRVSAARPKIASYPFTTITPNLGVVRVDDGRSFVMADIPGLIEGAHKGAGLGHDFLRHVERTRLLVHVLDTAGSEGRDPVQDFLVTNRELSLYNPALGRRPQVIAANKMDLDGAAENLARLKEAYGGKYEIFPVSAVTGQGLEALVYRVSALLEEIPAGAAVPEALERPVIHQAGPRFTVCREEGVFLVGGKEIERHVVMTDLKNEEAVERLQRIIRRMGIEEALKEAGIKDGDTVRIGDYEFEYVE.

Residues 1–158 (MFYDRARIFV…RWLDLELKLL (158 aa)) enclose the Obg domain. Residues 159-329 (ADVGLVGFPN…LVYRVSALLE (171 aa)) enclose the OBG-type G domain. Residues 165–172 (GFPNAGKS), 190–194 (FTTIT), 212–215 (DIPG), 282–285 (NKMD), and 310–312 (SAV) each bind GTP. Positions 172 and 192 each coordinate Mg(2+). The 86-residue stretch at 337–422 (VPEALERPVI…IGDYEFEYVE (86 aa)) folds into the OCT domain.

This sequence belongs to the TRAFAC class OBG-HflX-like GTPase superfamily. OBG GTPase family. As to quaternary structure, monomer. It depends on Mg(2+) as a cofactor.

It is found in the cytoplasm. In terms of biological role, an essential GTPase which binds GTP, GDP and possibly (p)ppGpp with moderate affinity, with high nucleotide exchange rates and a fairly low GTP hydrolysis rate. Plays a role in control of the cell cycle, stress response, ribosome biogenesis and in those bacteria that undergo differentiation, in morphogenesis control. The chain is GTPase Obg from Pelotomaculum thermopropionicum (strain DSM 13744 / JCM 10971 / SI).